Here is a 327-residue protein sequence, read N- to C-terminus: WRKY transcription factor WRKY76 (327 aa).

Residues 56–76 adopt a coiled-coil conformation; that stretch reads AKILEAKVTQMSEENRRLTEV. The disordered stretch occupies residues 88–134; the sequence is LGLDGSASPPRPVSPLSGKKRSRESMETANSCDANSNRHQGGDADHA. Positions 106-112 match the Nuclear localization signal motif; the sequence is KKRSRES. Positions 114 to 126 are enriched in polar residues; that stretch reads ETANSCDANSNRH. A DNA-binding region (WRKY) is located at residues 160 to 226; the sequence is DTSLVVKDGY…YEGEHNHPHP (67 aa).

Belongs to the WRKY group II-a family.

Its subcellular location is the nucleus. In terms of biological role, transcription repressor. Interacts specifically with the W box (5'-(T)TGAC[CT]-3'), a frequently occurring elicitor-responsive cis-acting element. Regulates, probably indirectly, the activation of defense-related genes during defense response. Modulates plant innate immunity against X.oryzae pv. oryzae (Xoo). The chain is WRKY transcription factor WRKY76 from Oryza sativa subsp. indica (Rice).